Consider the following 367-residue polypeptide: Glutamate 5-kinase (367 aa).

Position 10 (Lys10) interacts with ATP. Substrate is bound by residues Ser50, Asp137, and Asn149. ATP contacts are provided by residues 169–170 (TD) and 211–217 (TGGMGTK). A PUA domain is found at 275 to 353 (AGEITVDAGA…QQIDAILGYE (79 aa)).

It belongs to the glutamate 5-kinase family.

The protein resides in the cytoplasm. The enzyme catalyses L-glutamate + ATP = L-glutamyl 5-phosphate + ADP. Its pathway is amino-acid biosynthesis; L-proline biosynthesis; L-glutamate 5-semialdehyde from L-glutamate: step 1/2. Functionally, catalyzes the transfer of a phosphate group to glutamate to form L-glutamate 5-phosphate. In Klebsiella pneumoniae subsp. pneumoniae (strain ATCC 700721 / MGH 78578), this protein is Glutamate 5-kinase.